Reading from the N-terminus, the 638-residue chain is Protein disulfide-isomerase A4 (638 aa).

The signal sequence occupies residues methionine 1–alanine 20. Thioredoxin domains are found at residues alanine 21–glutamine 162 and glutamine 162–lysine 294. Residues alanine 24–glutamate 50 are disordered. Acidic residues predominate over residues serine 32–glutamate 50. A glycan (N-linked (GlcNAc...) asparagine) is linked at asparagine 36. Positions cysteine 84–cysteine 87 match the CXXC motif. Cystine bridges form between cysteine 84/cysteine 87 and cysteine 199/cysteine 202. Lysine 359 is subject to N6-acetyllysine. Residues phenylalanine 498 to threonine 629 enclose the Thioredoxin 3 domain. The CXXC motif lies at cysteine 548–cysteine 551. Cysteines 548 and 551 form a disulfide. The Prevents secretion from ER motif lies at lysine 635–leucine 638.

Belongs to the protein disulfide isomerase family. As to quaternary structure, part of a large chaperone multiprotein complex comprising DNAJB11, HSP90B1, HSPA5, HYOU, PDIA2, PDIA4, PDIA6, PPIB, SDF2L1, UGGT1 and very small amounts of ERP29, but not, or at very low levels, CALR nor CANX. Component of a complex containing at least CRELD2, MANF, MATN3 and PDIA4.

The protein resides in the endoplasmic reticulum lumen. Its subcellular location is the melanosome. It carries out the reaction Catalyzes the rearrangement of -S-S- bonds in proteins.. This is Protein disulfide-isomerase A4 (Pdia4) from Mus musculus (Mouse).